The following is a 152-amino-acid chain: Small ribosomal subunit protein uS5 (152 aa).

An S5 DRBM domain is found at F14 to V77.

Belongs to the universal ribosomal protein uS5 family. Part of the 30S ribosomal subunit. Contacts proteins S4 and S8.

Functionally, with S4 and S12 plays an important role in translational accuracy. Located at the back of the 30S subunit body where it stabilizes the conformation of the head with respect to the body. The polypeptide is Small ribosomal subunit protein uS5 (Sulfurovum sp. (strain NBC37-1)).